The chain runs to 280 residues: Bis(5'-nucleosyl)-tetraphosphatase, symmetrical (280 aa).

This sequence belongs to the Ap4A hydrolase family.

The enzyme catalyses P(1),P(4)-bis(5'-adenosyl) tetraphosphate + H2O = 2 ADP + 2 H(+). In terms of biological role, hydrolyzes diadenosine 5',5'''-P1,P4-tetraphosphate to yield ADP. The protein is Bis(5'-nucleosyl)-tetraphosphatase, symmetrical of Escherichia coli O17:K52:H18 (strain UMN026 / ExPEC).